The following is a 318-amino-acid chain: Beta-ketoacyl-[acyl-carrier-protein] synthase III (318 aa).

Active-site residues include cysteine 112 and histidine 245. The ACP-binding stretch occupies residues 246-250 (QANLR). Residue asparagine 275 is part of the active site.

The protein belongs to the thiolase-like superfamily. FabH family. As to quaternary structure, homodimer.

It localises to the cytoplasm. It carries out the reaction malonyl-[ACP] + acetyl-CoA + H(+) = 3-oxobutanoyl-[ACP] + CO2 + CoA. Its pathway is lipid metabolism; fatty acid biosynthesis. Its function is as follows. Catalyzes the condensation reaction of fatty acid synthesis by the addition to an acyl acceptor of two carbons from malonyl-ACP. Catalyzes the first condensation reaction which initiates fatty acid synthesis and may therefore play a role in governing the total rate of fatty acid production. Possesses both acetoacetyl-ACP synthase and acetyl transacylase activities. Its substrate specificity determines the biosynthesis of branched-chain and/or straight-chain of fatty acids. The chain is Beta-ketoacyl-[acyl-carrier-protein] synthase III from Blochmanniella floridana.